A 301-amino-acid polypeptide reads, in one-letter code: uncharacterized protein (301 aa).

It belongs to the asfivirus E301R family. As to quaternary structure, interacts with host IRF3.

Its function is as follows. Plays a role in the inhibition of host innate immune system by acting as a negatively regulator of type I interferon production. Mechanistically, interacts with and prevents host IRF3 nuclear localization to inhibit its transcriptional activity. This is an uncharacterized protein from African swine fever virus (isolate Pig/Kenya/KEN-50/1950) (ASFV).